The following is a 150-amino-acid chain: Transmembrane protein PMIS2 (150 aa).

Low complexity predominate over residues 1–12 (MALKPPSATQPA). The segment at 1 to 61 (MALKPPSATQ…EPQEPTQTPE (61 aa)) is disordered. A compositionally biased stretch (pro residues) spans 13-22 (PNAPATPDAP). Positions 23–61 (PTTGDPGASAAPGSPTTTGGPGAPAEVPQEPQEPTQTPE) are enriched in low complexity. 2 helical membrane passes run 71–91 (LCLT…ALYF) and 130–150 (GWFG…LVLY).

The protein belongs to the CD225/Dispanin family.

Its subcellular location is the membrane. Its function is as follows. May play a role in spermatozoa mobility. The protein is Transmembrane protein PMIS2 of Homo sapiens (Human).